A 59-amino-acid polypeptide reads, in one-letter code: Protein SspF (59 aa).

Belongs to the alpha/beta-type SASP family.

Its function is as follows. May play some important role in either sporulation or the dormant spore. The polypeptide is Protein SspF (sspF) (Bacillus cereus (strain ATCC 14579 / DSM 31 / CCUG 7414 / JCM 2152 / NBRC 15305 / NCIMB 9373 / NCTC 2599 / NRRL B-3711)).